An 808-amino-acid polypeptide reads, in one-letter code: Protein translocase subunit SecA (808 aa).

ATP-binding positions include Gln-87, 105 to 109, and Asp-493; that span reads GEGKT.

The protein belongs to the SecA family. In terms of assembly, monomer and homodimer. Part of the essential Sec protein translocation apparatus which comprises SecA, SecYEG and auxiliary proteins SecDF. Other proteins may also be involved.

It localises to the cell membrane. The protein resides in the cytoplasm. The catalysed reaction is ATP + H2O + cellular proteinSide 1 = ADP + phosphate + cellular proteinSide 2.. Functionally, part of the Sec protein translocase complex. Interacts with the SecYEG preprotein conducting channel. Has a central role in coupling the hydrolysis of ATP to the transfer of proteins into and across the cell membrane, serving as an ATP-driven molecular motor driving the stepwise translocation of polypeptide chains across the membrane. This Mycoplasma pneumoniae (strain ATCC 29342 / M129 / Subtype 1) (Mycoplasmoides pneumoniae) protein is Protein translocase subunit SecA.